We begin with the raw amino-acid sequence, 212 residues long: Acyl-homoserine-lactone synthase (212 aa).

The protein belongs to the autoinducer synthase family.

The enzyme catalyses a fatty acyl-[ACP] + S-adenosyl-L-methionine = an N-acyl-L-homoserine lactone + S-methyl-5'-thioadenosine + holo-[ACP] + H(+). Its function is as follows. Required for the synthesis of autoinducer molecules which bind to RaiR and that are involved in the restriction of nodule number. In Rhizobium etli, this protein is Acyl-homoserine-lactone synthase (raiI).